Consider the following 157-residue polypeptide: Nascent polypeptide-associated complex subunit beta (157 aa).

The disordered stretch occupies residues 1-31 (MPVDPEKLAKLQKSTAKKVGGSRVKAKKGVK). Positions 33-98 (EQDDTKLIET…PQEKNITQLI (66 aa)) constitute an NAC-A/B domain. Residues 125-157 (NPKDFGAAGEAGATEEANEDIPDLVDQKFDDVE) form a disordered region. Residues 130-139 (GAAGEAGATE) are compositionally biased toward low complexity.

Belongs to the NAC-beta family. In terms of assembly, part of the nascent polypeptide-associated complex (NAC), consisting of EGD2 and EGD1. NAC associates with ribosomes via EGD1.

The protein localises to the cytoplasm. The protein resides in the nucleus. In terms of biological role, component of the nascent polypeptide-associated complex (NAC), a dynamic component of the ribosomal exit tunnel, protecting the emerging polypeptides from interaction with other cytoplasmic proteins to ensure appropriate nascent protein targeting. The NAC complex also promotes mitochondrial protein import by enhancing productive ribosome interactions with the outer mitochondrial membrane and blocks the inappropriate interaction of ribosomes translating non-secretory nascent polypeptides with translocation sites in the membrane of the endoplasmic reticulum. EGD1 may act as a transcription factor that exert a negative effect on the expression of several genes that are transcribed by RNA polymerase II. In Lodderomyces elongisporus (strain ATCC 11503 / CBS 2605 / JCM 1781 / NBRC 1676 / NRRL YB-4239) (Yeast), this protein is Nascent polypeptide-associated complex subunit beta (EGD1).